A 456-amino-acid chain; its full sequence is RuvB-like helicase 1 (456 aa).

Glycine 70–threonine 77 serves as a coordination point for ATP.

Belongs to the RuvB family. In terms of assembly, forms homohexameric rings. May form a dodecamer with rept made of two stacked hexameric rings. Component of the chromatin remodeling Ino80 complex.

It is found in the nucleus. The enzyme catalyses ATP + H2O = ADP + phosphate + H(+). In terms of biological role, acts as a transcriptional coactivator in Wg signaling. Proposed core component of the chromatin remodeling Ino80 complex which is involved in transcriptional regulation, DNA replication and probably DNA repair. The protein is RuvB-like helicase 1 of Aedes aegypti (Yellowfever mosquito).